The chain runs to 378 residues: Chorismate synthase (378 aa).

Residues 37-60 are disordered; the sequence is EEEIQKDLTRRRPGQNDLTTPRDE. Position 47 (Arg47) interacts with NADP(+). FMN contacts are provided by residues 124–126, Gly289, 304–308, and Arg330; these read RSS and KPTST.

The protein belongs to the chorismate synthase family. Homotetramer. FMNH2 is required as a cofactor.

It catalyses the reaction 5-O-(1-carboxyvinyl)-3-phosphoshikimate = chorismate + phosphate. Its pathway is metabolic intermediate biosynthesis; chorismate biosynthesis; chorismate from D-erythrose 4-phosphate and phosphoenolpyruvate: step 7/7. In terms of biological role, catalyzes the anti-1,4-elimination of the C-3 phosphate and the C-6 proR hydrogen from 5-enolpyruvylshikimate-3-phosphate (EPSP) to yield chorismate, which is the branch point compound that serves as the starting substrate for the three terminal pathways of aromatic amino acid biosynthesis. This reaction introduces a second double bond into the aromatic ring system. This Leptospira biflexa serovar Patoc (strain Patoc 1 / Ames) protein is Chorismate synthase.